The primary structure comprises 1179 residues: DNA-directed RNA polymerase subunit beta' (1179 aa).

Cys-60, Cys-62, Cys-75, and Cys-78 together coordinate Zn(2+). Residues Asp-450, Asp-452, and Asp-454 each contribute to the Mg(2+) site. 4 residues coordinate Zn(2+): Cys-791, Cys-865, Cys-872, and Cys-875.

It belongs to the RNA polymerase beta' chain family. As to quaternary structure, the RNAP catalytic core consists of 2 alpha, 1 beta, 1 beta' and 1 omega subunit. When a sigma factor is associated with the core the holoenzyme is formed, which can initiate transcription. Mg(2+) is required as a cofactor. It depends on Zn(2+) as a cofactor.

It catalyses the reaction RNA(n) + a ribonucleoside 5'-triphosphate = RNA(n+1) + diphosphate. DNA-dependent RNA polymerase catalyzes the transcription of DNA into RNA using the four ribonucleoside triphosphates as substrates. The polypeptide is DNA-directed RNA polymerase subunit beta' (Alkaliphilus oremlandii (strain OhILAs) (Clostridium oremlandii (strain OhILAs))).